A 1824-amino-acid polypeptide reads, in one-letter code: E3 ubiquitin-protein ligase UBR1 (1824 aa).

Residues T107 to A178 form a UBR-type zinc finger. Disordered regions lie at residues K1006 to A1043 and A1073 to D1093. Positions E1033–A1043 are enriched in basic and acidic residues. The RING-type; atypical zinc-finger motif lies at F1126 to T1220.

It belongs to the E3 ubiquitin-protein ligase UBR1-like family.

The catalysed reaction is S-ubiquitinyl-[E2 ubiquitin-conjugating enzyme]-L-cysteine + [acceptor protein]-L-lysine = [E2 ubiquitin-conjugating enzyme]-L-cysteine + N(6)-ubiquitinyl-[acceptor protein]-L-lysine.. It functions in the pathway protein modification; protein ubiquitination. E3 ubiquitin-protein ligase which is a component of the N-end rule pathway. Recognizes and binds to proteins bearing specific N-terminal residues that are destabilizing according to the N-end rule, leading to their ubiquitination and subsequent degradation. This Drosophila melanogaster (Fruit fly) protein is E3 ubiquitin-protein ligase UBR1.